The chain runs to 353 residues: S-adenosylmethionine:tRNA ribosyltransferase-isomerase (353 aa).

This sequence belongs to the QueA family. Monomer.

Its subcellular location is the cytoplasm. It carries out the reaction 7-aminomethyl-7-carbaguanosine(34) in tRNA + S-adenosyl-L-methionine = epoxyqueuosine(34) in tRNA + adenine + L-methionine + 2 H(+). Its pathway is tRNA modification; tRNA-queuosine biosynthesis. Transfers and isomerizes the ribose moiety from AdoMet to the 7-aminomethyl group of 7-deazaguanine (preQ1-tRNA) to give epoxyqueuosine (oQ-tRNA). This Baumannia cicadellinicola subsp. Homalodisca coagulata protein is S-adenosylmethionine:tRNA ribosyltransferase-isomerase.